Consider the following 311-residue polypeptide: Aspartate carbamoyltransferase catalytic subunit (311 aa).

Positions 59 and 60 each coordinate carbamoyl phosphate. Lys87 is an L-aspartate binding site. Carbamoyl phosphate is bound by residues Arg109, His139, and Gln142. Arg172 and Arg224 together coordinate L-aspartate. Residues Ala265 and Pro266 each coordinate carbamoyl phosphate.

It belongs to the aspartate/ornithine carbamoyltransferase superfamily. ATCase family. Heterododecamer (2C3:3R2) of six catalytic PyrB chains organized as two trimers (C3), and six regulatory PyrI chains organized as three dimers (R2).

It catalyses the reaction carbamoyl phosphate + L-aspartate = N-carbamoyl-L-aspartate + phosphate + H(+). It functions in the pathway pyrimidine metabolism; UMP biosynthesis via de novo pathway; (S)-dihydroorotate from bicarbonate: step 2/3. Functionally, catalyzes the condensation of carbamoyl phosphate and aspartate to form carbamoyl aspartate and inorganic phosphate, the committed step in the de novo pyrimidine nucleotide biosynthesis pathway. The protein is Aspartate carbamoyltransferase catalytic subunit of Streptococcus equi subsp. zooepidemicus (strain MGCS10565).